The chain runs to 358 residues: Ion-translocating oxidoreductase complex subunit D (358 aa).

A run of 7 helical transmembrane segments spans residues Val16 to Trp36, Phe38 to Val58, Ile68 to Pro90, Ala128 to Leu148, Phe206 to Leu226, Ile236 to Pro256, and Pro286 to Ile306.

This sequence belongs to the NqrB/RnfD family. As to quaternary structure, the complex is composed of six subunits: RnfA, RnfB, RnfC, RnfD, RnfE and RnfG. FMN serves as cofactor.

The protein resides in the cellular chromatophore membrane. In terms of biological role, part of a membrane-bound complex that couples electron transfer with translocation of ions across the membrane. Required for nitrogen fixation. Involved in electron transfer to nitrogenase. This Rhodobacter capsulatus (Rhodopseudomonas capsulata) protein is Ion-translocating oxidoreductase complex subunit D.